The primary structure comprises 299 residues: Homoserine kinase (299 aa).

84–94 (PISRGLGSSSA) contacts ATP.

This sequence belongs to the GHMP kinase family. Homoserine kinase subfamily.

The protein localises to the cytoplasm. It catalyses the reaction L-homoserine + ATP = O-phospho-L-homoserine + ADP + H(+). It participates in amino-acid biosynthesis; L-threonine biosynthesis; L-threonine from L-aspartate: step 4/5. Functionally, catalyzes the ATP-dependent phosphorylation of L-homoserine to L-homoserine phosphate. In Helicobacter hepaticus (strain ATCC 51449 / 3B1), this protein is Homoserine kinase.